Here is a 232-residue protein sequence, read N- to C-terminus: Orotate phosphoribosyltransferase (232 aa).

5-phospho-alpha-D-ribose 1-diphosphate is bound by residues Arg-107, Lys-108, Lys-111, His-113, and 133–141 (EDLTTAGGS). Orotate is bound at residue Thr-137.

Belongs to the purine/pyrimidine phosphoribosyltransferase family. PyrE subfamily. Homodimer. Requires Mg(2+) as cofactor.

The catalysed reaction is orotidine 5'-phosphate + diphosphate = orotate + 5-phospho-alpha-D-ribose 1-diphosphate. It participates in pyrimidine metabolism; UMP biosynthesis via de novo pathway; UMP from orotate: step 1/2. Its function is as follows. Catalyzes the transfer of a ribosyl phosphate group from 5-phosphoribose 1-diphosphate to orotate, leading to the formation of orotidine monophosphate (OMP). The sequence is that of Orotate phosphoribosyltransferase from Agrobacterium fabrum (strain C58 / ATCC 33970) (Agrobacterium tumefaciens (strain C58)).